Reading from the N-terminus, the 281-residue chain is Pre T-cell antigen receptor alpha (281 aa).

An N-terminal signal peptide occupies residues 1–23 (MAGTWLLLLLALGCPALPTGVGG). Residues 24-146 (TPFPSLAPPI…QEPLRGTPGG (123 aa)) are Extracellular-facing. Cys-47 and Cys-107 are disulfide-bonded. The N-linked (GlcNAc...) asparagine glycan is linked to Asn-67. The chain crosses the membrane as a helical span at residues 147–167 (ALWLGVLRLLLFKLLLFDLLL). The Cytoplasmic portion of the chain corresponds to 168-281 (TCSCLCDPAG…LPPPLQAGAA (114 aa)). Positions 196–233 (LHPATETGGREATSSPRPQPRDRRWGDTPPGRKPGSPV) are disordered.

As to quaternary structure, heterodimer with TCRB; disulfide linked. This heterodimer assembles with CD3 proteins into a signaling-competent pre-T-cell receptor complex. Interacts with RHBDD1. Expressed in immature but not mature T-cells. Also found in CD34+ cells from peripheral blood, CD34+ precursors from umbilical cord blood and adult bone marrow.

It localises to the membrane. The protein resides in the cell membrane. Component of the pre-T-cell receptor complex (composed of PTCRA, TCRB and the CD3 complex) that has a crucial role in early T-cell development, particularly alpha-beta T cell differentiation. This chain is Pre T-cell antigen receptor alpha, found in Homo sapiens (Human).